The primary structure comprises 392 residues: FK506-binding protein 4 (392 aa).

Disordered regions lie at residues 58–116 (NPEL…NEID) and 161–284 (GNYV…PKTK). Composition is skewed to acidic residues over residues 73–86 (DGLE…EQEA), 104–116 (SESE…NEID), and 172–219 (SDSD…DASD). A phosphoserine mark is found at serine 80 and serine 82. Basic and acidic residues-rich tracts occupy residues 220–234 (IESR…DEKK) and 252–279 (SAKP…ESKP). One can recognise a PPIase FKBP-type domain in the interval 306–392 (GTRVGMRYVG…TFDVKLVSMK (87 aa)).

Belongs to the FKBP-type PPIase family. FKBP3/4 subfamily. In terms of assembly, binds to histones H3 and H4. Interacts with NOP53.

The protein localises to the nucleus. It carries out the reaction [protein]-peptidylproline (omega=180) = [protein]-peptidylproline (omega=0). In terms of biological role, PPIase that acts as a histone chaperone. Histone proline isomerase that increases the rate of cis-trans isomerization at 'Pro-17' (H3P16), 'Pro-31' (H3P30) and 'Pro-39 (H3P38) on the histone H3 N-terminal tail. H3P16 and H3P30 are the major proline targets with little activity shown against H3P38. H3P38 isomerization influences SET2-mediated H3K36 methylation thereby regulating gene expression. This Saccharomyces cerevisiae (strain ATCC 204508 / S288c) (Baker's yeast) protein is FK506-binding protein 4.